A 319-amino-acid polypeptide reads, in one-letter code: Acetyl-coenzyme A carboxylase carboxyl transferase subunit alpha (319 aa).

A CoA carboxyltransferase C-terminal domain is found at 35–296 (DLDKEIKQLE…KQRLIEQLNE (262 aa)).

This sequence belongs to the AccA family. As to quaternary structure, acetyl-CoA carboxylase is a heterohexamer composed of biotin carboxyl carrier protein (AccB), biotin carboxylase (AccC) and two subunits each of ACCase subunit alpha (AccA) and ACCase subunit beta (AccD).

The protein localises to the cytoplasm. The catalysed reaction is N(6)-carboxybiotinyl-L-lysyl-[protein] + acetyl-CoA = N(6)-biotinyl-L-lysyl-[protein] + malonyl-CoA. Its pathway is lipid metabolism; malonyl-CoA biosynthesis; malonyl-CoA from acetyl-CoA: step 1/1. Functionally, component of the acetyl coenzyme A carboxylase (ACC) complex. First, biotin carboxylase catalyzes the carboxylation of biotin on its carrier protein (BCCP) and then the CO(2) group is transferred by the carboxyltransferase to acetyl-CoA to form malonyl-CoA. This is Acetyl-coenzyme A carboxylase carboxyl transferase subunit alpha from Aliivibrio salmonicida (strain LFI1238) (Vibrio salmonicida (strain LFI1238)).